Consider the following 631-residue polypeptide: Serine/threonine-protein kinase PLK3 (631 aa).

The disordered stretch occupies residues 1 to 59 (MEPAAGFLSPRPFPRAAVPSAPPAGPGPPANASPRSEPEVLAGPRAPDPPGRLITDPLS). Residues 20 to 31 (SAPPAGPGPPAN) are compositionally biased toward pro residues. Residues 63–315 (YTKGRLLGKG…IEQILRHDFF (253 aa)) enclose the Protein kinase domain. Residues 69–77 (LGKGGFARC) and K92 each bind ATP. D186 serves as the catalytic Proton acceptor. POLO box domains are found at residues 448–526 (WVSK…YMEQ) and 547–630 (LLLQ…DQSP).

Belongs to the protein kinase superfamily. Ser/Thr protein kinase family. CDC5/Polo subfamily. In terms of assembly, interacts (via the POLO-box domain) with CIB1; leading to inhibit PLK3 kinase activity. Interacts with GOLGB1. In terms of processing, phosphorylated in an ATM-dependent manner following DNA damage. Phosphorylated as cells enter mitosis and dephosphorylated as cells exit mitosis. As to expression, expressed in skin.

The protein localises to the cytoplasm. It is found in the nucleus. The protein resides in the nucleolus. It localises to the golgi apparatus. Its subcellular location is the cytoskeleton. The protein localises to the microtubule organizing center. It is found in the centrosome. It catalyses the reaction L-seryl-[protein] + ATP = O-phospho-L-seryl-[protein] + ADP + H(+). It carries out the reaction L-threonyl-[protein] + ATP = O-phospho-L-threonyl-[protein] + ADP + H(+). Functionally, serine/threonine-protein kinase involved in cell cycle regulation, response to stress and Golgi disassembly. Polo-like kinases act by binding and phosphorylating proteins that are already phosphorylated on a specific motif recognized by the POLO box domains. Phosphorylates ATF2, BCL2L1, CDC25A, CDC25C, CHEK2, HIF1A, JUN, p53/TP53, p73/TP73, PTEN, TOP2A and VRK1. Involved in cell cycle regulation: required for entry into S phase and cytokinesis. Phosphorylates BCL2L1, leading to regulate the G2 checkpoint and progression to cytokinesis during mitosis. Plays a key role in response to stress: rapidly activated upon stress stimulation, such as ionizing radiation, reactive oxygen species (ROS), hyperosmotic stress, UV irradiation and hypoxia. Involved in DNA damage response and G1/S transition checkpoint by phosphorylating CDC25A, p53/TP53 and p73/TP73. Phosphorylates p53/TP53 in response to reactive oxygen species (ROS), thereby promoting p53/TP53-mediated apoptosis. Phosphorylates CHEK2 in response to DNA damage, promoting the G2/M transition checkpoint. Phosphorylates the transcription factor p73/TP73 in response to DNA damage, leading to inhibit p73/TP73-mediated transcriptional activation and pro-apoptotic functions. Phosphorylates HIF1A and JUN is response to hypoxia. Phosphorylates ATF2 following hyperosmotic stress in corneal epithelium. Also involved in Golgi disassembly during the cell cycle: part of a MEK1/MAP2K1-dependent pathway that induces Golgi fragmentation during mitosis by mediating phosphorylation of VRK1. May participate in endomitotic cell cycle, a form of mitosis in which both karyokinesis and cytokinesis are interrupted and is a hallmark of megakaryocyte differentiation, via its interaction with CIB1. In Mus musculus (Mouse), this protein is Serine/threonine-protein kinase PLK3 (Plk3).